We begin with the raw amino-acid sequence, 254 residues long: Triosephosphate isomerase, cytosolic (254 aa).

Substrate contacts are provided by Asn-10 and Lys-12. The active-site Electrophile is the His-96. The active-site Proton acceptor is Glu-166.

It belongs to the triosephosphate isomerase family. Homodimer.

The protein resides in the cytoplasm. It catalyses the reaction D-glyceraldehyde 3-phosphate = dihydroxyacetone phosphate. It participates in carbohydrate biosynthesis; gluconeogenesis. Its pathway is carbohydrate degradation; glycolysis; D-glyceraldehyde 3-phosphate from glycerone phosphate: step 1/1. This is Triosephosphate isomerase, cytosolic (TPIP1) from Petunia hybrida (Petunia).